The sequence spans 219 residues: uncharacterized protein (219 aa).

Positions 139-154 (PRKIKQKKKTKKKRPS) are enriched in basic residues. The tract at residues 139-160 (PRKIKQKKKTKKKRPSKSAPKT) is disordered. Residues 159 to 217 (KTYTVKKGDTLWDLAGKFYGDSTKWRKIWKVNKKAMIKRSKRNIRQPGHWIFPGQKLKI) form the LysM domain.

This is an uncharacterized protein from Bacillus subtilis (strain 168).